Reading from the N-terminus, the 153-residue chain is Large ribosomal subunit protein bL9 (153 aa).

This sequence belongs to the bacterial ribosomal protein bL9 family.

Its function is as follows. Binds to the 23S rRNA. The polypeptide is Large ribosomal subunit protein bL9 (Blochmanniella pennsylvanica (strain BPEN)).